A 476-amino-acid polypeptide reads, in one-letter code: MNFKSTIGLEVHFELKTKSKIFSPSPVTYGAEQNTETNVIDWAMPGTLPMVNKNVYRLGIMVALATHSHILPTTHFDRKNYFYPDNPKAYQITQFFQPLARDGYIEVEVRGKKKRIGIHEMHIEEDAGKNTHGTNGYSYVDLNRQGVPLLEVVSEPDMEDPEEAYAYLEKLRKIVQFTGASDVKMEEGSMRVDTNISIRPAGQKELGTKVEMKNLNSFDHVRRSLAYEEKRQEQVLLAGGHIQLSTRRFDEATGKTVLERVKEGASDYRYFPEPDIAPDHISQEWIDQIAKELPKSPFDRYDDYVNKFGLKPYDANVLLQTKESSDFFDAAVAAGADPTLAANWMNTQVNGYLNDNRVSLEDIKLTPENLAKMIKLIQDGTISSKIAKKVFAETVANGTDPKKYVEDNGMVQLSDTSVLEPMVKKVVDDNPQSVEDFKNGKDRAIGFLVGQIMKQTRGKANPKMVNKLLNQELQSR.

The protein belongs to the GatB/GatE family. GatB subfamily. Heterotrimer of A, B and C subunits.

It carries out the reaction L-glutamyl-tRNA(Gln) + L-glutamine + ATP + H2O = L-glutaminyl-tRNA(Gln) + L-glutamate + ADP + phosphate + H(+). It catalyses the reaction L-aspartyl-tRNA(Asn) + L-glutamine + ATP + H2O = L-asparaginyl-tRNA(Asn) + L-glutamate + ADP + phosphate + 2 H(+). Functionally, allows the formation of correctly charged Asn-tRNA(Asn) or Gln-tRNA(Gln) through the transamidation of misacylated Asp-tRNA(Asn) or Glu-tRNA(Gln) in organisms which lack either or both of asparaginyl-tRNA or glutaminyl-tRNA synthetases. The reaction takes place in the presence of glutamine and ATP through an activated phospho-Asp-tRNA(Asn) or phospho-Glu-tRNA(Gln). The polypeptide is Aspartyl/glutamyl-tRNA(Asn/Gln) amidotransferase subunit B (Lactobacillus acidophilus (strain ATCC 700396 / NCK56 / N2 / NCFM)).